The sequence spans 386 residues: L-prolyl-[peptidyl-carrier protein] dehydrogenase (386 aa).

FAD is bound by residues 125–134 (NAATEPDAGS) and 158–160 (FIT). The active-site Proton acceptor is Glu-244. FAD-binding positions include Arg-270, Gln-281, 338 to 342 (QTFGG), and 367 to 369 (TND).

It belongs to the acyl-CoA dehydrogenase family. FAD serves as cofactor.

It catalyses the reaction L-prolyl-[peptidyl-carrier protein] + 2 oxidized [electron-transfer flavoprotein] + H(+) = (1H-pyrrole-2-carbonyl)-[peptidyl-carrier protein] + 2 reduced [electron-transfer flavoprotein]. It participates in antibiotic biosynthesis; prodigiosin biosynthesis. Functionally, involved in the biosynthesis of 4-methoxy-2,2'-bipyrrole-5-carbaldehyde (MBC), one of the terminal products involved in the biosynthesis of the red antibiotic prodigiosin (Pig). Catalyzes the desaturation of the L-prolyl-[PigG] to yield 1H-pyrrole-2-carbonyl-[PigG]. This Serratia sp. (strain ATCC 39006) (Prodigiosinella confusarubida) protein is L-prolyl-[peptidyl-carrier protein] dehydrogenase.